We begin with the raw amino-acid sequence, 283 residues long: MISADSMLVYRDMDIGTAKPTLEEMAGIPHHMIDIVNPNEEFSVATYQSRVEELINQIIDRGNLPLLVGGTGLYIRSVIDHYDFTTAPKDDRLRECLKREAEQVGAAAMHKKLSEVDPQSAERLHPNDLRRVIRALEVYYQTGKTIAEYQYKDQVEKPKYNLKMFGLTMDRQLLYQRIEQRVDLMMARGLLTEVKELVEQYNGLGTALQGLGYKEIIGYLKGEYSLPEAVEILKRNTRRFAKRQLTWFRADNRIFWIEMDRFENKKAVANEIMKQMAGDFLTL.

Residues 5-8 (DSML) are interaction with substrate tRNA.

This sequence belongs to the IPP transferase family. Monomer. Mg(2+) is required as a cofactor.

It catalyses the reaction adenosine(37) in tRNA + dimethylallyl diphosphate = N(6)-dimethylallyladenosine(37) in tRNA + diphosphate. Functionally, catalyzes the transfer of a dimethylallyl group onto the adenine at position 37 in tRNAs that read codons beginning with uridine, leading to the formation of N6-(dimethylallyl)adenosine (i(6)A). The protein is tRNA dimethylallyltransferase of Desulforamulus reducens (strain ATCC BAA-1160 / DSM 100696 / MI-1) (Desulfotomaculum reducens).